The sequence spans 77 residues: Large ribosomal subunit protein bL28 (77 aa).

Residues 1–25 (MARVCQVTGKAPMSGNNVSHANNKT) form a disordered region.

The protein belongs to the bacterial ribosomal protein bL28 family.

The protein is Large ribosomal subunit protein bL28 of Paraburkholderia phymatum (strain DSM 17167 / CIP 108236 / LMG 21445 / STM815) (Burkholderia phymatum).